The primary structure comprises 284 residues: NAD kinase (284 aa).

The active-site Proton acceptor is the Asp-70. Residues 70 to 71, 139 to 140, Lys-167, Asp-169, Leu-177, 180 to 185, and Gln-236 contribute to the NAD(+) site; these read DG, NE, and TAYNLS.

Belongs to the NAD kinase family. It depends on a divalent metal cation as a cofactor.

The protein localises to the cytoplasm. It catalyses the reaction NAD(+) + ATP = ADP + NADP(+) + H(+). Its function is as follows. Involved in the regulation of the intracellular balance of NAD and NADP, and is a key enzyme in the biosynthesis of NADP. Catalyzes specifically the phosphorylation on 2'-hydroxyl of the adenosine moiety of NAD to yield NADP. This chain is NAD kinase, found in Helicobacter pylori (strain P12).